Here is a 30-residue protein sequence, read N- to C-terminus: Bowman-Birk type proteinase inhibitor 3 (30 aa).

Disulfide bonds link Cys-9–Cys-24 and Cys-14–Cys-22.

Inhibits trypsin (IC(50)=4.90 nM) and, to a lesser extent, alpha-chymotrypsin (IC(50)=1.87 uM). The chain is Bowman-Birk type proteinase inhibitor 3 from Lathyrus sativus (White vetchling).